The chain runs to 3590 residues: Filamentous hemagglutinin (3590 aa).

2 disordered regions span residues 3256 to 3309 (GGGS…VEVS) and 3417 to 3498 (APPP…GRHV). Over residues 3289–3299 (PSRPTTPPASP) the composition is skewed to pro residues. The span at 3300–3309 (QPIRATVEVS) shows a compositional bias: low complexity. Residues 3417–3432 (APPPVVETAQPLPPVK) are compositionally biased toward pro residues.

The protein localises to the cell surface. In terms of biological role, evidence for a role in host-cell binding and infection. The sequence is that of Filamentous hemagglutinin (fhaB) from Bordetella pertussis (strain Tohama I / ATCC BAA-589 / NCTC 13251).